The following is a 550-amino-acid chain: MATPQQPLLTKTHKQNSIISFKILTFVVTLFVALFLVVFLVAPYQFEIKHSNLCKTAQDSQLCLSYVSDLISNEIVTSDSDGLSILKKFLVYSVHQMNNAIPVVRKIKNQINDIREQGALTDCLELLDLSVDLVCDSIAAIDKRSRSEHANAQSWLSGVLTNHVTCLDELDSFTKAMINGTNLDELISRAKVALAMLASVTTPNDEVLRPGLGKMPSWVSSRDRKLMESSGKDIGANAVVAKDGTGKYRTLAEAVAAAPDKSKTRYVIYVKRGTYKENVEVSSRKMNLMIIGDGMYATIITGSLNVVDGSTTFHSATLAAVGKGFILQDICIQNTAGPAKHQAVALRVGADKSVINRCRIDAYQDTLYAHSQRQFYRDSYVTGTIDFIFGNAAVVFQKCQLVARKPGKYQQNMVTAQGRTDPNQATGTSIQFCDIIASPDLKPVVKEFPTYLGRPWKKYSRTVVMESYLGGLIDPSGWAEWHGDFALKTLYYGEFMNNGPGAGTSKRVKWPGYHVITDPAEAMSFTVAKLIQGGSWLRSTDVAYVDGLYD.

The N-linked (GlcNAc...) asparagine glycan is linked to asparagine 179. Substrate contacts are provided by threonine 312 and glutamine 342. Cysteine 331 and cysteine 358 form a disulfide bridge. Aspartate 365 functions as the Proton donor in the catalytic mechanism. Aspartate 386 serves as the catalytic Nucleophile. Cysteine 399 and cysteine 433 are joined by a disulfide. Arginine 454 and tryptophan 456 together coordinate substrate.

It in the N-terminal section; belongs to the PMEI family. The protein in the C-terminal section; belongs to the pectinesterase family.

The protein localises to the secreted. It is found in the cell wall. It catalyses the reaction [(1-&gt;4)-alpha-D-galacturonosyl methyl ester](n) + n H2O = [(1-&gt;4)-alpha-D-galacturonosyl](n) + n methanol + n H(+). It participates in glycan metabolism; pectin degradation; 2-dehydro-3-deoxy-D-gluconate from pectin: step 1/5. Pectinesterase may play a role in cell wall metabolism during fruit growth and development prior to ripening and may be required for preparing cell walls for softening by polygalacturonase during fruit ripening. The polypeptide is Pectinesterase 2.1 (PME2.1) (Solanum lycopersicum (Tomato)).